The following is a 526-amino-acid chain: Keratin, type I cytoskeletal 10 (526 aa).

Low complexity predominate over residues Met1–Arg16. The interval Met1–Gly40 is disordered. The segment at Met1 to Asn144 is head. 5 positions are modified to phosphoserine: Ser17, Ser38, Ser49, Ser52, and Ser169. Residues Ser17–Ser28 show a composition bias toward gly residues. Residues Glu145–Trp180 are coil 1A. In terms of domain architecture, IF rod spans Glu145–Val459. Residues Tyr181–Thr201 are linker 1. The coil 1B stretch occupies residues Ile202–Leu293. Residues Gln294–Leu316 form a linker 12 region. A coil 2 region spans residues Leu317–Glu455. Positions Gly456 to Tyr526 are tail.

It belongs to the intermediate filament family. In terms of assembly, heterotetramer of two type I and two type II keratins. Heterodimer with KRT1. Two heterodimers of KRT1 and KRT10 form a heterotetramer. The KRT10 subunit in the heterotetramer is probably disulfide-linked.

The protein resides in the secreted. The protein localises to the extracellular space. It is found in the cell surface. It localises to the cytoplasm. Its function is as follows. Plays a role in the establishment of the epidermal barrier on plantar skin. Involved in the maintenance of cell layer development and keratin filament bundles in suprabasal cells of the epithelium. This chain is Keratin, type I cytoskeletal 10, found in Rattus norvegicus (Rat).